A 651-amino-acid polypeptide reads, in one-letter code: Translation initiation factor eIF2B subunit delta (651 aa).

Residues 1–108 (MSESEAKSRS…NERNVKKSTL (108 aa)) form a disordered region. At Ser-2 the chain carries N-acetylserine. Low complexity predominate over residues 11 to 28 (ATPPSKAKQATPTTTAAA). Basic and acidic residues-rich tracts occupy residues 30–49 (GEKK…EKAA) and 76–90 (KQLQ…EQKQ). Ser-106 bears the Phosphoserine mark. At Thr-121 the chain carries Phosphothreonine. A disordered region spans residues 566 to 600 (AMENKPKGNKIGGKKGSEGESKDASNEEDSNSKNI). Over residues 580-590 (KGSEGESKDAS) the composition is skewed to basic and acidic residues.

This sequence belongs to the eIF-2B alpha/beta/delta subunits family. In terms of assembly, component of the translation initiation factor 2B (eIF2B) complex which is a heterodecamer of two sets of five different subunits: alpha, beta, gamma, delta and epsilon. Subunits alpha, beta and delta comprise a regulatory subcomplex and subunits epsilon and gamma comprise a catalytic subcomplex. Within the complex, the hexameric regulatory complex resides at the center, with the two heterodimeric catalytic subcomplexes bound on opposite sides.

It localises to the cytoplasm. The protein localises to the cytosol. In terms of biological role, acts as a component of the translation initiation factor 2B (eIF2B) complex, which catalyzes the exchange of GDP for GTP on the eukaryotic initiation factor 2 (eIF2) complex gamma subunit. Its guanine nucleotide exchange factor activity is repressed when bound to eIF2 complex phosphorylated on the alpha subunit, thereby limiting the amount of methionyl-initiator methionine tRNA available to the ribosome and consequently global translation is repressed. It activates the synthesis of GCN4 in yeast under amino acid starvation conditions by suppressing the inhibitory effects of multiple AUG codons present in the leader of GCN4 mRNA. It may promote either repression or activation of GCN4 expression depending on amino acid availability. GCD2 is also required for cell viability. Its function can partially be replaced by GCN3 under normal growth conditions in GCD2-defective mutants, under AA starvation conditions GCN3 is an antagonist (GCN4 translational activator). The chain is Translation initiation factor eIF2B subunit delta (GCD2) from Saccharomyces cerevisiae (strain ATCC 204508 / S288c) (Baker's yeast).